The primary structure comprises 164 residues: CB1 cannabinoid receptor-interacting protein 1 (164 aa).

Belongs to the CNRIP family. In terms of assembly, interacts with the cannabinoid receptor CNR1 (via C-terminus). Does not interact with cannabinoid receptor CNR2. Highly expressed in brain. Also detected in heart, lung, intestine, kidney, testis, spleen, liver and muscle (at protein level).

Suppresses cannabinoid receptor CNR1-mediated tonic inhibition of voltage-gated calcium channels. In Mus musculus (Mouse), this protein is CB1 cannabinoid receptor-interacting protein 1 (Cnrip1).